Reading from the N-terminus, the 143-residue chain is Large ribosomal subunit protein uL13 (143 aa).

Belongs to the universal ribosomal protein uL13 family. As to quaternary structure, part of the 50S ribosomal subunit.

Functionally, this protein is one of the early assembly proteins of the 50S ribosomal subunit, although it is not seen to bind rRNA by itself. It is important during the early stages of 50S assembly. The sequence is that of Large ribosomal subunit protein uL13 from Natranaerobius thermophilus (strain ATCC BAA-1301 / DSM 18059 / JW/NM-WN-LF).